The chain runs to 471 residues: Ubiquitin carboxyl-terminal hydrolase calypso (471 aa).

Positions 45–276 (GWLELESDPG…IRFNLMAVVP (232 aa)) constitute a UCH catalytic domain. The active-site Nucleophile is Cys-131. The Proton donor role is filled by His-213. Positions 307 to 326 (DEQGESGNGDSQRPDTPTTL) are disordered. The segment covering 314-326 (NGDSQRPDTPTTL) has biased composition (polar residues). The region spanning 375–403 (NYDKFICTFLSMLAHQGVLGELVSQHLLP) is the ULD domain. Residues 405-471 (KKVSGQGAAN…KGRNKCRKRK (67 aa)) are positively charged C-terminal tail required for binding nucleosomes. Residues 412–471 (AANRISKQSNTASAGGSTTGASASTPKTQQQQAAAAKNGKSPSKTPGRRRKGRNKCRKRK) are disordered. Residues 422–447 (TASAGGSTTGASASTPKTQQQQAAAA) show a composition bias toward low complexity. A compositionally biased stretch (basic residues) spans 457–471 (PGRRRKGRNKCRKRK).

It belongs to the peptidase C12 family. BAP1 subfamily. In terms of assembly, catalytic component of the polycomb repressive deubiquitinase (PR-DUB) complex, at least composed of caly/calypso, Asx and sba (MBD5/6 homolog). The PR-DUB complex associates with nucleosomes to mediate deubiquitination of histone H2AK118ub1 substrates; the association requires the positively charged C-terminal tail of caly, probably due to direct binding of DNA. Interacts (via ULD domain) with Asx (via DEUBAD domain); the interaction produces a stable heterodimer with a composite binding site for ubiquitin. Homodimerizes (via coiled-coil hinge-region between the UCH and ULD domains) to mediate assembly of 2 copies of the caly-Asx heterodimer into a bisymmetric tetramer; dimerization enhances PR-DUB association with nucleosomes.

It localises to the nucleus. It catalyses the reaction Thiol-dependent hydrolysis of ester, thioester, amide, peptide and isopeptide bonds formed by the C-terminal Gly of ubiquitin (a 76-residue protein attached to proteins as an intracellular targeting signal).. Functionally, catalytic component of the polycomb repressive deubiquitinase (PR-DUB) complex, a complex that specifically mediates deubiquitination of histone H2A monoubiquitinated at 'Lys-119' (H2AK118ub1). Mediates bisymmetric organization of the PR-DUB complex and is involved in association with nucleosomes to mediate deubiquitination. Does not deubiquitinate monoubiquitinated histone H2B. Required to maintain the transcriptionally repressive state of homeotic genes throughout development. The PR-DUB complex has weak or no activity toward 'Lys-48'- and 'Lys-63'-linked polyubiquitin chains. Polycomb group (PcG) protein. The chain is Ubiquitin carboxyl-terminal hydrolase calypso from Drosophila sechellia (Fruit fly).